A 499-amino-acid polypeptide reads, in one-letter code: Multiphosphoryl transfer protein (499 aa).

The PTS EIIA type-2 domain occupies Leu-2–Glu-142. His-62 (tele-phosphohistidine intermediate; for EIIA activity) is an active-site residue. His-62 carries the phosphohistidine; by HPr modification. The interval Ser-155–Gly-285 is m domain. In terms of domain architecture, HPr 1 spans Ala-286 to Asn-376. His-300 serves as the catalytic Pros-phosphohistidine intermediate; for HPr 1 activity. His-300 bears the Phosphohistidine mark. The interval Ser-378–Asn-409 is linker. In terms of domain architecture, HPr 2 spans Ala-410–Glu-499. At His-424 the chain carries Phosphohistidine. His-424 (pros-phosphohistidine intermediate; for HPr 2 activity) is an active-site residue.

The protein resides in the cytoplasm. Functionally, the phosphoenolpyruvate-dependent sugar phosphotransferase system (sugar PTS), a major carbohydrate active transport system, catalyzes the phosphorylation of incoming sugar substrates concomitantly with their translocation across the cell membrane. The enzyme II FruAB PTS system is involved in fructose transport. The polypeptide is Multiphosphoryl transfer protein (fruB) (Haemophilus influenzae (strain ATCC 51907 / DSM 11121 / KW20 / Rd)).